The following is a 2388-amino-acid chain: Spectrin beta chain, non-erythrocytic 2 (2388 aa).

Serine 2 carries the post-translational modification N-acetylserine. The interval 2–278 (SSTLSPTDFD…IITYVATYYH (277 aa)) is actin-binding. Phosphoserine is present on residues serine 6 and serine 31. Calponin-homology (CH) domains follow at residues 57–161 (AVQK…LRFQ) and 176–281 (KSAK…HYFS). Spectrin repeat units follow at residues 306–414 (LVEK…LALR), 427–527 (AARF…RERL), 532–639 (ELQK…RLEE), 642–744 (RLWR…QRLA), 749–849 (LYQF…RALE), and 856–954 (TMLS…KAAL). Phosphoserine is present on serine 959. 11 Spectrin repeats span residues 960–1063 (IQNY…SLGE), 1066–1169 (RLQD…GRLA), 1174–1266 (FQGF…NQEA), 1279–1379 (EQQH…ARSL), 1384–1485 (RAEL…RRLQ), 1489–1586 (EQHQ…RLEE), 1589–1692 (RAQQ…RLQE), 1696–1797 (LCQL…GQVL), 1801–1904 (YELQ…QLLL), 1910–2010 (FRFF…DWLQ), and 2017–2078 (VFGR…LTAL). Serine 1073 carries the post-translational modification Phosphoserine. Serine 1574 bears the Phosphoserine mark. The segment covering 2080-2096 (ERENEQKRKREEEERRK) has biased composition (basic and acidic residues). 2 disordered regions span residues 2080–2112 (EREN…EGSL) and 2124–2207 (DGTQ…HVAT). The segment covering 2124–2163 (DGTQSKLPPSTQAPSINGVCTDTESSQPLLEQQRLEQSNV) has biased composition (polar residues). A phosphoserine mark is found at serine 2169 and serine 2199. A PH domain is found at 2218–2328 (QEQMEGTLCR…WLRVVNAAIA (111 aa)). The disordered stretch occupies residues 2333–2388 (ASGEPEEPVVPSASRGLTRAMTMPPVSQPEGSIVLRSKDGREREREKRFSFFKKNK). At threonine 2354 the chain carries Phosphothreonine. The residue at position 2359 (serine 2359) is a Phosphoserine. Positions 2368-2381 (RSKDGREREREKRF) are enriched in basic and acidic residues.

Belongs to the spectrin family. Abundantly transcribed in the brain. Neurons are the predominant cell-type to express the gene. Found abundantly in Purkinje cells.

The protein resides in the cytoplasm. It is found in the cytoskeleton. The protein localises to the cell cortex. Its function is as follows. Probably plays an important role in neuronal membrane skeleton. The chain is Spectrin beta chain, non-erythrocytic 2 (Sptbn2) from Rattus norvegicus (Rat).